A 402-amino-acid polypeptide reads, in one-letter code: Subtilisin-like protease 9 (402 aa).

The N-terminal stretch at 1–20 (MGFFRQLFSLSLCALSLAIP) is a signal peptide. Residues 21–120 (SKLIGLENTQ…VEVDRVVKLD (100 aa)) constitute a propeptide that is removed on maturation. In terms of domain architecture, Inhibitor I9 spans 36–119 (SYIVVMKSTI…YVEVDRVVKL (84 aa)). The Peptidase S8 domain occupies 130 to 402 (SWGLGRISHK…RKLLYNGSGA (273 aa)). Active-site charge relay system residues include Asp162 and His193. A glycan (N-linked (GlcNAc...) asparagine) is linked at Asn254. Ser348 functions as the Charge relay system in the catalytic mechanism. Asn390 and Asn398 each carry an N-linked (GlcNAc...) asparagine glycan.

The protein belongs to the peptidase S8 family.

It is found in the secreted. In terms of biological role, secreted subtilisin-like serine protease with keratinolytic activity that contributes to pathogenicity. In Arthroderma benhamiae (strain ATCC MYA-4681 / CBS 112371) (Trichophyton mentagrophytes), this protein is Subtilisin-like protease 9 (SUB9).